Here is a 146-residue protein sequence, read N- to C-terminus: Hemoglobin subunit beta (146 aa).

V1 carries the post-translational modification N-acetylvaline. Residues 2 to 146 (HLTGEEKSAV…VATALAHKYH (145 aa)) enclose the Globin domain. T12 carries the post-translational modification Phosphothreonine. The residue at position 44 (S44) is a Phosphoserine. Residue H63 participates in heme b binding. K82 carries the post-translational modification N6-acetyllysine. Heme b is bound at residue H92. C93 carries the post-translational modification S-nitrosocysteine. An N6-acetyllysine modification is found at K144.

The protein belongs to the globin family. As to quaternary structure, heterotetramer of two alpha chains and two beta chains. In terms of tissue distribution, red blood cells.

Functionally, involved in oxygen transport from the lung to the various peripheral tissues. The chain is Hemoglobin subunit beta (HBB) from Tursiops truncatus (Atlantic bottle-nosed dolphin).